The following is a 358-amino-acid chain: Biotin synthase (358 aa).

Residues 50–277 (NEVQVSTLCS…KSHVRLSAGR (228 aa)) form the Radical SAM core domain. [4Fe-4S] cluster-binding residues include Cys65, Cys69, and Cys72. 4 residues coordinate [2Fe-2S] cluster: Cys109, Cys140, Cys200, and Arg272.

It belongs to the radical SAM superfamily. Biotin synthase family. In terms of assembly, homodimer. [4Fe-4S] cluster serves as cofactor. Requires [2Fe-2S] cluster as cofactor.

It catalyses the reaction (4R,5S)-dethiobiotin + (sulfur carrier)-SH + 2 reduced [2Fe-2S]-[ferredoxin] + 2 S-adenosyl-L-methionine = (sulfur carrier)-H + biotin + 2 5'-deoxyadenosine + 2 L-methionine + 2 oxidized [2Fe-2S]-[ferredoxin]. It participates in cofactor biosynthesis; biotin biosynthesis; biotin from 7,8-diaminononanoate: step 2/2. Functionally, catalyzes the conversion of dethiobiotin (DTB) to biotin by the insertion of a sulfur atom into dethiobiotin via a radical-based mechanism. This Cellvibrio japonicus (strain Ueda107) (Pseudomonas fluorescens subsp. cellulosa) protein is Biotin synthase.